The primary structure comprises 369 residues: Chorismate synthase (369 aa).

Residues Arg48 and Arg54 each contribute to the NADP(+) site. FMN contacts are provided by residues Arg125 to Ser127, Asn238 to Ala239, Gly283, Lys298 to Ser302, and Arg324.

This sequence belongs to the chorismate synthase family. In terms of assembly, homotetramer. It depends on FMNH2 as a cofactor.

It catalyses the reaction 5-O-(1-carboxyvinyl)-3-phosphoshikimate = chorismate + phosphate. It participates in metabolic intermediate biosynthesis; chorismate biosynthesis; chorismate from D-erythrose 4-phosphate and phosphoenolpyruvate: step 7/7. Its function is as follows. Catalyzes the anti-1,4-elimination of the C-3 phosphate and the C-6 proR hydrogen from 5-enolpyruvylshikimate-3-phosphate (EPSP) to yield chorismate, which is the branch point compound that serves as the starting substrate for the three terminal pathways of aromatic amino acid biosynthesis. This reaction introduces a second double bond into the aromatic ring system. The chain is Chorismate synthase from Acidiphilium cryptum (strain JF-5).